Consider the following 597-residue polypeptide: MAVNDREFHLKELDPVLMKDWEIAEKAEDFLKPVKVLAMELGLTEDEIIPHGKYIAKVDFAGVLARLKDRPNGKYIDVTAITPTPLGEGKSTTTMGLVQGLGKLGKKVTGAIRQPSSGPTFNIKGSAAGGGLSQCLPLSPFSLGLTGDIDAVTNSHNLAMVALQARLQHEANNTDEFLSSRHLTRLDIDPSRVEMKWAMDFCAQSLREIIMGIGGKTDGYRMPSGFGISVSSEVMAILSVFTSLSDLRERMGKIIVAYRKNDEPVTTADLEVDGAMTALLLRAVNPNLLQTIEGQPVFVHAGPFANIAIGQSSIVADRLALKLADYHVTESGFGADIGFEKFWNIKCRLSGLKPDCAVIVVTARALKMHGGGPKVTPGAPLDPAYTTPNTKLVEKGCQNMLAHIQTVKTAGINPVVCINHFAADTHEEIDIIRRTAEQAEARVAVSHHWAKGGDGATELAEAVTDACNEPNNFHFLYPENMPLKKRIETIARKVYGANGVSYTPIAMEKLARIESMGDTQFMPTCMVKTHLSLSHDPALKGRPSGFTLPIRDILTYMGAGLVVPVAGDIKLMPGTSSDPNFKRIDVDTQTGKVKGLF.

Residue 84–91 (TPLGEGKS) participates in ATP binding.

Belongs to the formate--tetrahydrofolate ligase family.

The enzyme catalyses (6S)-5,6,7,8-tetrahydrofolate + formate + ATP = (6R)-10-formyltetrahydrofolate + ADP + phosphate. Its pathway is one-carbon metabolism; tetrahydrofolate interconversion. In Dehalococcoides mccartyi (strain CBDB1), this protein is Formate--tetrahydrofolate ligase.